A 337-amino-acid chain; its full sequence is S-adenosylmethionine:tRNA ribosyltransferase-isomerase (337 aa).

The protein belongs to the QueA family. In terms of assembly, monomer.

It localises to the cytoplasm. The catalysed reaction is 7-aminomethyl-7-carbaguanosine(34) in tRNA + S-adenosyl-L-methionine = epoxyqueuosine(34) in tRNA + adenine + L-methionine + 2 H(+). The protein operates within tRNA modification; tRNA-queuosine biosynthesis. Transfers and isomerizes the ribose moiety from AdoMet to the 7-aminomethyl group of 7-deazaguanine (preQ1-tRNA) to give epoxyqueuosine (oQ-tRNA). This is S-adenosylmethionine:tRNA ribosyltransferase-isomerase from Legionella pneumophila subsp. pneumophila (strain Philadelphia 1 / ATCC 33152 / DSM 7513).